The primary structure comprises 468 residues: Argininosuccinate lyase (468 aa).

The protein belongs to the lyase 1 family. Argininosuccinate lyase subfamily.

It localises to the cytoplasm. The catalysed reaction is 2-(N(omega)-L-arginino)succinate = fumarate + L-arginine. Its pathway is amino-acid biosynthesis; L-arginine biosynthesis; L-arginine from L-ornithine and carbamoyl phosphate: step 3/3. The polypeptide is Argininosuccinate lyase (Gloeobacter violaceus (strain ATCC 29082 / PCC 7421)).